The following is a 443-amino-acid chain: Ribosomal protein uS12 methylthiotransferase RimO (443 aa).

The MTTase N-terminal domain maps to 8-118 (PKVGFVSLGC…VVNAVHEVVP (111 aa)). Residues Cys-17, Cys-53, Cys-82, Cys-151, Cys-155, and Cys-158 each coordinate [4Fe-4S] cluster. A Radical SAM core domain is found at 137-376 (LTPRHYAYLK…AHQQAISSAR (240 aa)). One can recognise a TRAM domain in the interval 378–443 (QLRIGKEIEV…DEYDMWAEPV (66 aa)).

This sequence belongs to the methylthiotransferase family. RimO subfamily. [4Fe-4S] cluster serves as cofactor.

Its subcellular location is the cytoplasm. The catalysed reaction is L-aspartate(89)-[ribosomal protein uS12]-hydrogen + (sulfur carrier)-SH + AH2 + 2 S-adenosyl-L-methionine = 3-methylsulfanyl-L-aspartate(89)-[ribosomal protein uS12]-hydrogen + (sulfur carrier)-H + 5'-deoxyadenosine + L-methionine + A + S-adenosyl-L-homocysteine + 2 H(+). Functionally, catalyzes the methylthiolation of an aspartic acid residue of ribosomal protein uS12. This Pseudomonas putida (strain W619) protein is Ribosomal protein uS12 methylthiotransferase RimO.